A 411-amino-acid chain; its full sequence is Arginine biosynthesis bifunctional protein ArgJ (411 aa).

Residues Thr-160, Lys-186, Thr-197, Glu-283, Asn-406, and Thr-411 each contribute to the substrate site. Thr-197 (nucleophile) is an active-site residue.

It belongs to the ArgJ family. In terms of assembly, heterotetramer of two alpha and two beta chains.

The protein localises to the cytoplasm. It catalyses the reaction N(2)-acetyl-L-ornithine + L-glutamate = N-acetyl-L-glutamate + L-ornithine. It carries out the reaction L-glutamate + acetyl-CoA = N-acetyl-L-glutamate + CoA + H(+). Its pathway is amino-acid biosynthesis; L-arginine biosynthesis; L-ornithine and N-acetyl-L-glutamate from L-glutamate and N(2)-acetyl-L-ornithine (cyclic): step 1/1. It participates in amino-acid biosynthesis; L-arginine biosynthesis; N(2)-acetyl-L-ornithine from L-glutamate: step 1/4. Feedback inhibition by L-ornithine. Catalyzes two activities which are involved in the cyclic version of arginine biosynthesis: the synthesis of N-acetylglutamate from glutamate and acetyl-CoA as the acetyl donor, and of ornithine by transacetylation between N(2)-acetylornithine and glutamate. This is Arginine biosynthesis bifunctional protein ArgJ from Halalkalibacterium halodurans (strain ATCC BAA-125 / DSM 18197 / FERM 7344 / JCM 9153 / C-125) (Bacillus halodurans).